The sequence spans 211 residues: N-(5'-phosphoribosyl)anthranilate isomerase (211 aa).

It belongs to the TrpF family.

It carries out the reaction N-(5-phospho-beta-D-ribosyl)anthranilate = 1-(2-carboxyphenylamino)-1-deoxy-D-ribulose 5-phosphate. Its pathway is amino-acid biosynthesis; L-tryptophan biosynthesis; L-tryptophan from chorismate: step 3/5. The polypeptide is N-(5'-phosphoribosyl)anthranilate isomerase (Hyphomonas neptunium (strain ATCC 15444)).